The chain runs to 383 residues: Subtelomeric hrmA-associated cluster protein AFUB_078970 (383 aa).

Disordered stretches follow at residues 118 to 145 (NPVS…KDDD) and 249 to 318 (QATQ…SARP). Residues 119–134 (PVSEVPESPPSTVKSS) show a composition bias toward low complexity. One can recognise a Myb-like domain in the interval 318-364 (PYSAAEDDILQTLVARGLAWEEIEKEFGLRFAKRTMRSLQMRWSRKL).

In terms of biological role, myb-like domain-containing protein; part of the subtelomeric hrmA-associated cluster (HAC) containing genes that alter the hyphal surface (such as reduced total chitin or increased beta-glucan exposure) and perturb inter-hyphal interactions within the developing biofilms, resulting in a loss of vertically aligned polarized growing filaments. Consequently, this hypoxia-typic morphotype (called H-MORPH) with altered biofilm architecture leads to increased hypoxia fitness, increased host inflammation, rapid disease progression, and mortality in a murine model of invasive aspergillosis. The polypeptide is Subtelomeric hrmA-associated cluster protein AFUB_078970 (Aspergillus fumigatus (strain CBS 144.89 / FGSC A1163 / CEA10) (Neosartorya fumigata)).